Consider the following 399-residue polypeptide: Mycinamicin VI 2''-O-methyltransferase (399 aa).

Residues threonine 173, 202–208 (EIGVGGY), serine 217, aspartate 234, 252–253 (DQ), and aspartate 275 contribute to the S-adenosyl-L-methionine site. Aspartate 275 is a binding site for Mg(2+). Histidine 278 (proton acceptor) is an active-site residue. 2 residues coordinate Mg(2+): glutamate 303 and aspartate 304.

Belongs to the methyltransferase OleY/MycE family. As to quaternary structure, homotetramer. It depends on Mg(2+) as a cofactor.

It carries out the reaction mycinamicin VI + S-adenosyl-L-methionine = mycinamicin III + S-adenosyl-L-homocysteine + H(+). The protein operates within antibiotic biosynthesis; mycinamicin biosynthesis. In terms of biological role, O-methyltransferase that catalyzes the conversion of mycinamicin VI to mycinamicin III in the biosynthesis of mycinamicin, a 16-membered macrolide antibiotic. The polypeptide is Mycinamicin VI 2''-O-methyltransferase (mycE) (Micromonospora griseorubida).